The sequence spans 164 residues: Cyclic pyranopterin monophosphate synthase (164 aa).

Substrate-binding positions include 75-77 (MCH) and 116-117 (ME). The active site involves Asp131.

Belongs to the MoaC family. In terms of assembly, homohexamer; trimer of dimers.

It catalyses the reaction (8S)-3',8-cyclo-7,8-dihydroguanosine 5'-triphosphate = cyclic pyranopterin phosphate + diphosphate. It functions in the pathway cofactor biosynthesis; molybdopterin biosynthesis. Catalyzes the conversion of (8S)-3',8-cyclo-7,8-dihydroguanosine 5'-triphosphate to cyclic pyranopterin monophosphate (cPMP). This is Cyclic pyranopterin monophosphate synthase from Staphylococcus aureus (strain Mu3 / ATCC 700698).